Reading from the N-terminus, the 519-residue chain is Developmental regulatory protein wetA (519 aa).

Disordered regions lie at residues 105–165 (PSRP…MRSS), 270–294 (PSSA…WQSD), 301–320 (LSFT…PMPS), 325–344 (QQAS…NVGN), 389–452 (SQIH…GSNK), and 470–495 (LTGV…RRRK). Positions 108 to 118 (PTATHALSTSP) are enriched in low complexity. Positions 155–165 (QSFSPSLMRSS) are enriched in polar residues. Polar residues predominate over residues 301–315 (LSFTPDLQGQDSQWW). Polar residues predominate over residues 389–400 (SQIHNVSRSPSL). Residues 419–428 (PTHRRTHSRK) show a composition bias toward basic residues. Positions 435-452 (NAPKPAKASGSSSRGSNK) are enriched in low complexity.

The protein belongs to the wetA family.

In terms of biological role, brlA, abaA and wetA are pivotal regulators of conidiophore development and conidium maturation. They act individually and together to regulate their own expression and that of numerous other sporulation-specific genes. In Penicillium camembertii, this protein is Developmental regulatory protein wetA.